We begin with the raw amino-acid sequence, 506 residues long: (+)-vincadifformine 19-hydroxylase (506 aa).

At 1–4 the chain is on the lumenal side; sequence MELD. Residues 5–25 traverse the membrane as a helical segment; the sequence is ECSPSIFIISFIFIAISIAIL. At 26 to 506 the chain is on the cytoplasmic side; the sequence is RRIRPKKTKA…DLHLIPTSYM (481 aa). Residue cysteine 450 participates in heme binding.

It belongs to the cytochrome P450 family. Heme serves as cofactor. In terms of tissue distribution, accumulates progressively in roots.

It is found in the endoplasmic reticulum membrane. It catalyses the reaction (+)-vincadifformine + reduced [NADPH--hemoprotein reductase] + O2 = (+)-minovincinine + oxidized [NADPH--hemoprotein reductase] + H2O + H(+). Its pathway is alkaloid biosynthesis. Its activity is regulated as follows. The enantiomer (-)-vincadifformine acts as a competitive inhibitor. In terms of biological role, component of the monoterpenoid indole alkaloids (MIAs, e.g. echitovenine, tabersonine, lochnericine, 19-hydroxytabersonine and horhammericine) biosynthetic pathway; MIAs are used in cancer treatment and other medical applications. Cytochrome P450 catalyzing the hydroxylation of (+)-vincadifformine to (+)-minovincinine. This is (+)-vincadifformine 19-hydroxylase from Catharanthus roseus (Madagascar periwinkle).